We begin with the raw amino-acid sequence, 457 residues long: Antizyme inhibitor 2 (457 aa).

Residues 115–138 form a necessary for polyamine uptake stimulation region; that stretch reads QVAQIKYAAKHGVRLLSFDNEVEL.

Belongs to the Orn/Lys/Arg decarboxylase class-II family. ODC antizyme inhibitor subfamily. As to quaternary structure, monomer. Interacts with OAZ1, OAZ2 and OAZ3; this interaction disrupts the interaction between the antizyme and ODC1. Does not form a heterodimer with ODC1. Ubiquitinated, leading to its proteasomal degradation; a process that is reduced in presence of antizymes. May also be degraded through the lysosomal degradative pathway in a proteasomal-independent manner.

The protein resides in the nucleus. The protein localises to the cytoplasm. It is found in the perinuclear region. It localises to the membrane. Its subcellular location is the cytoplasmic vesicle. The protein resides in the endoplasmic reticulum-Golgi intermediate compartment. The protein localises to the golgi apparatus. It is found in the cis-Golgi network. It localises to the trans-Golgi network. Its subcellular location is the cytoplasmic granule. The protein resides in the cell projection. The protein localises to the axon. It is found in the dendrite. It localises to the perikaryon. In terms of biological role, antizyme inhibitor (AZI) protein that positively regulates ornithine decarboxylase (ODC) activity and polyamine uptake. AZI is an enzymatically inactive ODC homolog that counteracts the negative effect of ODC antizymes (AZs) OAZ1, OAZ2 and OAZ3 on ODC activity by competing with ODC for antizyme-binding. Inhibits antizyme-dependent ODC degradation and releases ODC monomers from their inactive complex with antizymes, leading to formation of the catalytically active ODC homodimer and restoring polyamine production. Participates in the morphological integrity of the trans-Golgi network (TGN) and functions as a regulator of intracellular secretory vesicle trafficking. This Rattus norvegicus (Rat) protein is Antizyme inhibitor 2 (Azin2).